We begin with the raw amino-acid sequence, 374 residues long: Chaperone protein DnaJ (374 aa).

One can recognise a J domain in the interval 4–68 (DYYDILGVSR…ETRARYDRFG (65 aa)). The segment at 133 to 215 (GGEKQIRITH…CGGNGQAQVT (83 aa)) adopts a CR-type zinc-finger fold. The Zn(2+) site is built by Cys146, Cys149, Cys163, Cys166, Cys189, Cys192, Cys203, and Cys206. 4 CXXCXGXG motif repeats span residues 146–153 (CTTCNGSG), 163–170 (CGTCGGAG), 189–196 (CPTCNGKG), and 203–210 (CETCGGNG).

The protein belongs to the DnaJ family. As to quaternary structure, homodimer. Requires Zn(2+) as cofactor.

It is found in the cytoplasm. In terms of biological role, participates actively in the response to hyperosmotic and heat shock by preventing the aggregation of stress-denatured proteins and by disaggregating proteins, also in an autonomous, DnaK-independent fashion. Unfolded proteins bind initially to DnaJ; upon interaction with the DnaJ-bound protein, DnaK hydrolyzes its bound ATP, resulting in the formation of a stable complex. GrpE releases ADP from DnaK; ATP binding to DnaK triggers the release of the substrate protein, thus completing the reaction cycle. Several rounds of ATP-dependent interactions between DnaJ, DnaK and GrpE are required for fully efficient folding. Also involved, together with DnaK and GrpE, in the DNA replication of plasmids through activation of initiation proteins. In Cyanothece sp. (strain PCC 7425 / ATCC 29141), this protein is Chaperone protein DnaJ.